The following is a 132-amino-acid chain: Ribosome-binding factor A (132 aa).

It belongs to the RbfA family. Monomer. Binds 30S ribosomal subunits, but not 50S ribosomal subunits or 70S ribosomes.

It localises to the cytoplasm. Functionally, one of several proteins that assist in the late maturation steps of the functional core of the 30S ribosomal subunit. Associates with free 30S ribosomal subunits (but not with 30S subunits that are part of 70S ribosomes or polysomes). Required for efficient processing of 16S rRNA. May interact with the 5'-terminal helix region of 16S rRNA. This Pseudomonas putida (strain GB-1) protein is Ribosome-binding factor A.